The primary structure comprises 855 residues: MNNNLFEGSDDDGEDLQLSTNKDYAKTYNILRKKELLQKYKDRGLDVSESEFDSDSSSSEEDEVDPKFDQDFFKTLSSLKSKDPCIYDKGTKFFSESSGDEDDKDGEAPKKKKKAKPVTLKDYERKVILEHNGKFESSDEEQQEKEHEELQRAQSPSAVEEERRLKAEFRKVMNKEDDSEDEEFGGIFKKRSKTKEQTAAEEADFAKWLAGKQAEIQETDKKQLEPLKQYWSSNKLTQGESFLRDYILNKGYANTDESAIPTYDEIVGEAAPLSEDEQELEKQAEFEHKYNFRFEEPDADFIKRYPRTIEQSLRRTDDKRKEKRKELKERKDQEKQQKMKELELVKEMKRKEIDEKIRKLKAVTGNDELGFRDEELEEDFDPAAHDRRMQELFDDEYYNVDEGEEKPECPSDIDELVLEDWDNYDPRQHANGGGEDYEGHCEDDDFNMDCDYDPSTAKEQLQQELIENTRGRKGRKGRRNRFMEMIQAEKPAFNPEDEKTYSEYIDEYYQMDCEDIIGDQPCRFKYVETTPNDFGLTIEEILLAKNKELNQWASLKKAVQNRPEHVEKKEQRLYKMKAKNEDLKRKIFKSLYGEGSDDEEQPAEEKPEVTPAEATAPAENGQVSTEGLSKSKRKRLKRKAAAAAASAPKVLKEESDSKDPKEADGSTEDVQAESSKKKVDTPSKKGKDDANQETKNSPQSTEKTKNNNALKNNKKEPKNVQNGFQKPQNQANKSAKTKSNQPFKTTESAPAKAEKSNGNNPFNKPQSKSQQRQELPPIHKNQGGNKKGPRNANGTNPFKKSNQKPSAPFPAKKTNNFKAKNKQNNNSGITDDRLKAYGINPRKFHKREKYGKKDN.

Disordered stretches follow at residues 47-67 (VSES…VDPK), 82-117 (KDPC…KAKP), 130-196 (EHNG…KTKE), 312-342 (SLRR…MKEL), 424-453 (YDPR…CDYD), and 589-855 (KSLY…KKDN). A compositionally biased stretch (acidic residues) spans 48 to 64 (SESEFDSDSSSSEEDEV). Positions 82 to 91 (KDPCIYDKGT) are enriched in basic and acidic residues. S95, S97, S98, S137, and S138 each carry phosphoserine. The span at 160–176 (EEERRLKAEFRKVMNKE) shows a compositional bias: basic and acidic residues. S179 carries the phosphoserine modification. Residues 307–362 (RTIEQSLRRTDDKRKEKRKELKERKDQEKQQKMKELELVKEMKRKEIDEKIRKLKA) adopt a coiled-coil conformation. Over residues 441-452 (CEDDDFNMDCDY) the composition is skewed to acidic residues. The span at 609 to 619 (VTPAEATAPAE) shows a compositional bias: low complexity. Positions 630-640 (KSKRKRLKRKA) are enriched in basic residues. 2 stretches are compositionally biased toward basic and acidic residues: residues 650-664 (VLKE…KEAD) and 674-692 (SSKK…DANQ). Polar residues-rich tracts occupy residues 720-748 (VQNG…TTES), 756-773 (SNGN…QQRQ), and 792-805 (ANGT…NQKP). Low complexity predominate over residues 812 to 826 (KKTNNFKAKNKQNNN). The segment covering 842-855 (RKFHKREKYGKKDN) has biased composition (basic residues).

It belongs to the KRI1 family.

The sequence is that of Protein KRI1 homolog from Drosophila melanogaster (Fruit fly).